Here is a 274-residue protein sequence, read N- to C-terminus: Nitrogenase iron protein (274 aa).

Gly8–Ser15 is a binding site for ATP. A [4Fe-4S] cluster-binding site is contributed by Cys94. Arg97 carries the ADP-ribosylarginine; by dinitrogenase reductase ADP-ribosyltransferase modification. Position 131 (Cys131) interacts with [4Fe-4S] cluster.

The protein belongs to the NifH/BchL/ChlL family. As to quaternary structure, homodimer. It depends on [4Fe-4S] cluster as a cofactor. Post-translationally, the reversible ADP-ribosylation of Arg-97 inactivates the nitrogenase reductase and regulates nitrogenase activity.

It carries out the reaction N2 + 8 reduced [2Fe-2S]-[ferredoxin] + 16 ATP + 16 H2O = H2 + 8 oxidized [2Fe-2S]-[ferredoxin] + 2 NH4(+) + 16 ADP + 16 phosphate + 6 H(+). The key enzymatic reactions in nitrogen fixation are catalyzed by the nitrogenase complex, which has 2 components: the iron protein and the molybdenum-iron protein. The chain is Nitrogenase iron protein from Chlorobium luteolum (strain DSM 273 / BCRC 81028 / 2530) (Pelodictyon luteolum).